An 886-amino-acid polypeptide reads, in one-letter code: DNA double-strand break repair Rad50 ATPase (886 aa).

ATP-binding positions include arginine 13, 33–39 (NGAGKSS), and glutamine 128. Coiled-coil stretches lie at residues 183–360 (EQIK…LLET) and 400–433 (KEIT…LKSA). In terms of domain architecture, Zinc-hook spans 392-489 (LSKAKEEEKE…RLEKVEKALE (98 aa)). Cysteine 437 and cysteine 440 together coordinate Zn(2+). Coiled-coil stretches lie at residues 489 to 518 (EKQE…DAEK) and 545 to 713 (SSAS…KKVE). ATP is bound at residue 792–797 (FLSGGE).

It belongs to the SMC family. RAD50 subfamily. In terms of assembly, homodimer. Forms a heterotetramer composed of two Mre11 subunits and two Rad50 subunits. Requires Zn(2+) as cofactor.

Functionally, part of the Rad50/Mre11 complex, which is involved in the early steps of DNA double-strand break (DSB) repair. The complex may facilitate opening of the processed DNA ends to aid in the recruitment of HerA and NurA. Rad50 controls the balance between DNA end bridging and DNA resection via ATP-dependent structural rearrangements of the Rad50/Mre11 complex. In Archaeoglobus fulgidus (strain ATCC 49558 / DSM 4304 / JCM 9628 / NBRC 100126 / VC-16), this protein is DNA double-strand break repair Rad50 ATPase.